Here is a 5571-residue protein sequence, read N- to C-terminus: Polyketide synthase GfsB (5571 aa).

Residues 1–27 (MSVPPPGATPSRTSRTKGLKDRPRMEN) are disordered. Over residues 18-27 (GLKDRPRMEN) the composition is skewed to basic and acidic residues. In terms of domain architecture, Ketosynthase family 3 (KS3) 1 spans 57-483 (QEPVAIIGMS…GTNAHVIIEQ (427 aa)). Module regions lie at residues 57 to 2148 (QEPV…RDTL), 2167 to 3728 (DEPL…GSQV), and 3746 to 5485 (DEPV…HTHL). Active-site for beta-ketoacyl synthase 1 activity residues include Cys-230, His-365, and His-405. Residues 485–518 (PAIEGTGLGDDAPPTAEHPEERTPADGGPAPQPV) are disordered. Residues 611–926 (FVFPGQGSQW…LRSLAEAYAH (316 aa)) enclose the Malonyl-CoA:ACP transacylase (MAT) 1 domain. Positions 976-1109 (HPLLAAATSL…GYLAVGAHEP (134 aa)) are N-terminal hotdog fold 1. The region spanning 976 to 1264 (HPLLAAATSL…LRPLATNQAP (289 aa)) is the PKS/mFAS DH 1 domain. His-1008 serves as the catalytic Proton acceptor; for dehydratase activity 1. The C-terminal hotdog fold 1 stretch occupies residues 1122-1264 (ATPLDVTDLY…LRPLATNQAP (143 aa)). Asp-1183 (proton donor; for dehydratase activity 1) is an active-site residue. Residues 1478–1777 (GTLDHLTLIP…QARHIGKIVL (300 aa)) enclose the Enoyl reductase (ER) domain. Positions 1787-1966 (GTVLVTGATG…TSLAWGLWEE (180 aa)) constitute a Ketoreductase (KR) 1 domain. In terms of domain architecture, Carrier 1 spans 2073-2148 (RIVNDLVRDH…ELAAHLRDTL (76 aa)). Ser-2108 is subject to O-(pantetheine 4'-phosphoryl)serine. The Ketosynthase family 3 (KS3) 2 domain maps to 2167 to 2593 (DEPLAVVAMS…GTNAHVILEQ (427 aa)). Residues Cys-2340, His-2475, and His-2515 each act as for beta-ketoacyl synthase 2 activity in the active site. The Malonyl-CoA:ACP transacylase (MAT) 2 domain occupies 2710–3016 (VFSGQGSQRP…AAVALQRGNR (307 aa)). Residues 3373–3551 (GTVLVTGGTG…VSVAWGPWAE (179 aa)) enclose the Ketoreductase (KR) 2 domain. Positions 3653–3728 (TALLDLVRGQ…ALAEYVGSQV (76 aa)) constitute a Carrier 2 domain. Ser-3688 is subject to O-(pantetheine 4'-phosphoryl)serine. One can recognise a Ketosynthase family 3 (KS3) 3 domain in the interval 3746-4172 (DEPVAIIGMS…GTNAHVILEQ (427 aa)). Active-site for beta-ketoacyl synthase 3 activity residues include Cys-3919, His-4054, and His-4094. Residues 4279-4601 (FLFSGQGSQR…ATAHVNGVQP (323 aa)) enclose the Malonyl-CoA:ACP transacylase (MAT) 3 domain. Positions 4649–4774 (HPLLAGVVDL…GALTVAEAVD (126 aa)) are N-terminal hotdog fold 2. The 283-residue stretch at 4649 to 4931 (HPLLAGVVDL…TRPIAAGQLA (283 aa)) folds into the PKS/mFAS DH 2 domain. His-4681 (proton acceptor; for dehydratase activity 2) is an active-site residue. The interval 4787–4931 (AIEVELDDPY…TRPIAAGQLA (145 aa)) is C-terminal hotdog fold 2. Residue Asp-4848 is the Proton donor; for dehydratase activity 2 of the active site. Residues 5134 to 5306 (LLVTGASGVL…TSLSWGLWAE (173 aa)) form the Ketoreductase (KR) 3 domain. The 76-residue stretch at 5410–5485 (RMVLDLVRDR…ALARYLHTHL (76 aa)) folds into the Carrier 3 domain. Ser-5445 is modified (O-(pantetheine 4'-phosphoryl)serine).

Pantetheine 4'-phosphate serves as cofactor.

It participates in antibiotic biosynthesis. Its function is as follows. Second protein in the synthesis of the 16-membered macrolide antibiotics FD-891 and FD-892. Composed of 3 modules. Modifies the product of GfsA by multiple rounds of addition of malonyl-CoA or methylmalonyl-CoA and other modifications to help generate the final products. The polypeptide is Polyketide synthase GfsB (Streptomyces halstedii).